The following is a 382-amino-acid chain: Alkanesulfonate monooxygenase (382 aa).

This sequence belongs to the SsuD family. As to quaternary structure, homotetramer.

The enzyme catalyses an alkanesulfonate + FMNH2 + O2 = an aldehyde + FMN + sulfite + H2O + 2 H(+). In terms of biological role, catalyzes the desulfonation of aliphatic sulfonates. The polypeptide is Alkanesulfonate monooxygenase (Buttiauxella sp. (strain PNBS)).